The following is a 344-amino-acid chain: Dihydroorotate dehydrogenase (quinone) (344 aa).

FMN-binding positions include 65 to 69 (AGLDK) and Thr89. Lys69 contacts substrate. Substrate is bound at residue 114–118 (NRLGF). FMN contacts are provided by Asn145 and Asn178. Asn178 contacts substrate. Ser181 functions as the Nucleophile in the catalytic mechanism. Residue Asn183 coordinates substrate. Positions 223 and 251 each coordinate FMN. Position 252-253 (252-253 (NT)) interacts with substrate. Residues Gly274, Gly303, and 324 to 325 (YT) contribute to the FMN site.

Belongs to the dihydroorotate dehydrogenase family. Type 2 subfamily. Monomer. Requires FMN as cofactor.

It is found in the cell membrane. It carries out the reaction (S)-dihydroorotate + a quinone = orotate + a quinol. It participates in pyrimidine metabolism; UMP biosynthesis via de novo pathway; orotate from (S)-dihydroorotate (quinone route): step 1/1. Catalyzes the conversion of dihydroorotate to orotate with quinone as electron acceptor. The chain is Dihydroorotate dehydrogenase (quinone) from Methylibium petroleiphilum (strain ATCC BAA-1232 / LMG 22953 / PM1).